Reading from the N-terminus, the 313-residue chain is Protein FixB (313 aa).

Residue 255–283 (LYLAVGISGQIQHMVGANASQTIFAINKD) participates in FAD binding.

Belongs to the ETF alpha-subunit/FixB family. In terms of assembly, heterodimer of FixA and FixB.

It functions in the pathway amine and polyamine metabolism; carnitine metabolism. Its function is as follows. Required for anaerobic carnitine reduction. May bring reductant to CaiA. The polypeptide is Protein FixB (Shigella flexneri).